Consider the following 367-residue polypeptide: Anhydro-N-acetylmuramic acid kinase (367 aa).

13 to 20 (GTSMDGAD) is an ATP binding site.

Belongs to the anhydro-N-acetylmuramic acid kinase family.

It carries out the reaction 1,6-anhydro-N-acetyl-beta-muramate + ATP + H2O = N-acetyl-D-muramate 6-phosphate + ADP + H(+). Its pathway is amino-sugar metabolism; 1,6-anhydro-N-acetylmuramate degradation. It participates in cell wall biogenesis; peptidoglycan recycling. In terms of biological role, catalyzes the specific phosphorylation of 1,6-anhydro-N-acetylmuramic acid (anhMurNAc) with the simultaneous cleavage of the 1,6-anhydro ring, generating MurNAc-6-P. Is required for the utilization of anhMurNAc either imported from the medium or derived from its own cell wall murein, and thus plays a role in cell wall recycling. This Neisseria meningitidis serogroup B (strain ATCC BAA-335 / MC58) protein is Anhydro-N-acetylmuramic acid kinase.